A 63-amino-acid chain; its full sequence is Large ribosomal subunit protein uL30 (63 aa).

Belongs to the universal ribosomal protein uL30 family. As to quaternary structure, part of the 50S ribosomal subunit.

The chain is Large ribosomal subunit protein uL30 from Rickettsia africae (strain ESF-5).